Consider the following 341-residue polypeptide: Thromboxane A2 receptor (341 aa).

Topologically, residues 1-29 (MWPNGTSLGACFRPVNITLQERRAIASPW) are extracellular. 2 N-linked (GlcNAc...) asparagine glycosylation sites follow: Asn-4 and Asn-16. The helical transmembrane segment at 30 to 52 (FAASFCALGLGSNLLALSVLAGA) threads the bilayer. Residues 53-65 (RPGAGPRSSFLAL) lie on the Cytoplasmic side of the membrane. Residues 66–86 (LCGLVLTDFLGLLVTGAIVAS) traverse the membrane as a helical segment. Topologically, residues 87–105 (QHAALLDWRATDPSCRLCY) are extracellular. A disulfide bridge connects residues Cys-104 and Cys-181. The chain crosses the membrane as a helical span at residues 106–127 (FMGVAMVFFGLCPLLLGAAMAS). At 128–147 (ERFVGITRPFSRPTATSRRA) the chain is on the cytoplasmic side. Residues 148–170 (WATVGLVWVAAGALGLLPLLGLG) traverse the membrane as a helical segment. The Extracellular portion of the chain corresponds to 171 to 191 (RYSVQYPGSWCFLTLGTQRGD). Residues 192 to 217 (VVFGLIFALLGSASVGLSLLLNTVSV) traverse the membrane as a helical segment. At 218-244 (ATLCRVYHTREATQRPRDCEVEMMVQL) the chain is on the cytoplasmic side. The helical transmembrane segment at 245 to 268 (VGIMVVATVCWMPLLVFIMQTLLQ) threads the bilayer. At 269-287 (TPPVMSFSGQLLRATEHQL) the chain is on the extracellular side. The helical transmembrane segment at 288 to 309 (LIYLRVATWNQILDPWVYILFR) threads the bilayer. At 310–341 (RSVLRRLHPRFSSQLQAVSLRRPPAQAMLSGP) the chain is on the cytoplasmic side. Residue Ser-328 is modified to Phosphoserine.

It belongs to the G-protein coupled receptor 1 family. Interacts with RPGRIP1L. Interacts with RACK1; the interaction regulates TBXA2R cell surface expression.

The protein resides in the cell membrane. Its function is as follows. Receptor for thromboxane A2 (TXA2), a potent stimulator of platelet aggregation. The activity of this receptor is mediated by a G-protein that activates a phosphatidylinositol-calcium second messenger system. In the kidney, the binding of TXA2 to glomerular TP receptors causes intense vasoconstriction. Activates phospholipase C and adenylyl cyclase. This chain is Thromboxane A2 receptor (Tbxa2r), found in Mus musculus (Mouse).